Reading from the N-terminus, the 122-residue chain is Large ribosomal subunit protein uL18 (122 aa).

Belongs to the universal ribosomal protein uL18 family. In terms of assembly, part of the 50S ribosomal subunit; part of the 5S rRNA/L5/L18/L25 subcomplex. Contacts the 5S and 23S rRNAs.

This is one of the proteins that bind and probably mediate the attachment of the 5S RNA into the large ribosomal subunit, where it forms part of the central protuberance. The protein is Large ribosomal subunit protein uL18 of Dictyoglomus turgidum (strain DSM 6724 / Z-1310).